Reading from the N-terminus, the 473-residue chain is 3-isopropylmalate dehydratase large subunit (473 aa).

Residues cysteine 348, cysteine 408, and cysteine 411 each coordinate [4Fe-4S] cluster.

It belongs to the aconitase/IPM isomerase family. LeuC type 1 subfamily. As to quaternary structure, heterodimer of LeuC and LeuD. It depends on [4Fe-4S] cluster as a cofactor.

It carries out the reaction (2R,3S)-3-isopropylmalate = (2S)-2-isopropylmalate. The protein operates within amino-acid biosynthesis; L-leucine biosynthesis; L-leucine from 3-methyl-2-oxobutanoate: step 2/4. Catalyzes the isomerization between 2-isopropylmalate and 3-isopropylmalate, via the formation of 2-isopropylmaleate. The chain is 3-isopropylmalate dehydratase large subunit from Haloarcula marismortui (strain ATCC 43049 / DSM 3752 / JCM 8966 / VKM B-1809) (Halobacterium marismortui).